Consider the following 398-residue polypeptide: MFLKNIFIALAIALLADATPTTSNNSPGFVALNFDVIKTHKNVTGPQGEINTNVNVKRQTVPVKLINEQVSYASDITVGSNKQKLTVVIDTGSSDLWVPDSQVSCQAGQGQDPNFCKNEGTYSPSSSSSSQNLNSPFSIEYGDGTTSQGTWYKDTIGFGGISITKQQFADVTSTSVDQGILGIGYKTHEAEGNYDNVPVTLKNQGIISKNAYSLYLNSRQATSGQIIFGGVDNAKYSGALIALPVTSDNELRIHLNTVKVAGQSINADVDVLLDSGTTITYLQQGVADQVISAFNGQETYDANGNLFYLVDCNLSGSVDFAFDKNAKISVPASEFTAPLYTEDGQVYDQCQLLFGTSDYNILGDNFLRSAYIVYDLDDNEISLAQVKYTTASNIAALT.

Positions 1 to 18 (MFLKNIFIALAIALLADA) are cleaved as a signal peptide. The propeptide at 19-58 (TPTTSNNSPGFVALNFDVIKTHKNVTGPQGEINTNVNVKR) is activation peptide. A glycan (N-linked (GlcNAc...) asparagine) is linked at Asn42. The Peptidase A1 domain maps to 72 to 384 (YASDITVGSN…DLDDNEISLA (313 aa)). Asp90 is a catalytic residue. 90 to 92 (DTG) is a binding site for pepstatin A. The span at 103–112 (VSCQAGQGQD) shows a compositional bias: polar residues. Residues 103–139 (VSCQAGQGQDPNFCKNEGTYSPSSSSSSQNLNSPFSI) are disordered. A disulfide bridge links Cys105 with Cys116. Positions 123 to 138 (SPSSSSSSQNLNSPFS) are enriched in low complexity. Residues 140–143 (EYGD) and 274–278 (DSGTT) contribute to the pepstatin A site. The active site involves Asp274. The cysteines at positions 312 and 350 are disulfide-linked. The N-linked (GlcNAc...) asparagine glycan is linked to Asn313.

Belongs to the peptidase A1 family. Post-translationally, O-glycosylated.

The protein localises to the secreted. It catalyses the reaction Preferential cleavage at the carboxyl of hydrophobic amino acids, but fails to cleave 15-Leu-|-Tyr-16, 16-Tyr-|-Leu-17 and 24-Phe-|-Phe-25 of insulin B chain. Activates trypsinogen, and degrades keratin.. The protein is Candidapepsin-3 (SAP3) of Candida albicans (strain WO-1) (Yeast).